We begin with the raw amino-acid sequence, 259 residues long: uncharacterized protein (259 aa).

One can recognise an HD domain in the interval 51-173 (GKTHAKIVAN…IAVADGTDMT (123 aa)).

This is an uncharacterized protein from Methanocaldococcus jannaschii (strain ATCC 43067 / DSM 2661 / JAL-1 / JCM 10045 / NBRC 100440) (Methanococcus jannaschii).